A 228-amino-acid polypeptide reads, in one-letter code: 5'-methylthioadenosine/S-adenosylhomocysteine nucleosidase (228 aa).

Glu11 (proton acceptor) is an active-site residue. Residues Gly77, Ile151, and 172–173 (ME) each bind substrate. Asp196 acts as the Proton donor in catalysis.

Belongs to the PNP/UDP phosphorylase family. MtnN subfamily.

It catalyses the reaction S-adenosyl-L-homocysteine + H2O = S-(5-deoxy-D-ribos-5-yl)-L-homocysteine + adenine. It carries out the reaction S-methyl-5'-thioadenosine + H2O = 5-(methylsulfanyl)-D-ribose + adenine. The catalysed reaction is 5'-deoxyadenosine + H2O = 5-deoxy-D-ribose + adenine. Its pathway is amino-acid biosynthesis; L-methionine biosynthesis via salvage pathway; S-methyl-5-thio-alpha-D-ribose 1-phosphate from S-methyl-5'-thioadenosine (hydrolase route): step 1/2. Functionally, catalyzes the irreversible cleavage of the glycosidic bond in both 5'-methylthioadenosine (MTA) and S-adenosylhomocysteine (SAH/AdoHcy) to adenine and the corresponding thioribose, 5'-methylthioribose and S-ribosylhomocysteine, respectively. Also cleaves 5'-deoxyadenosine, a toxic by-product of radical S-adenosylmethionine (SAM) enzymes, into 5-deoxyribose and adenine. The protein is 5'-methylthioadenosine/S-adenosylhomocysteine nucleosidase of Staphylococcus haemolyticus (strain JCSC1435).